Consider the following 458-residue polypeptide: Elongation factor 1-alpha (458 aa).

At glycine 2 the chain carries N,N,N-trimethylglycine. The residue at position 3 (lysine 3) is an N6,N6-dimethyllysine; alternate. The residue at position 3 (lysine 3) is an N6-methyllysine; alternate. The 236-residue stretch at 5-240 folds into the tr-type G domain; sequence KTHVNVVVIG…DAIDPPQRPS (236 aa). The interval 14 to 21 is G1; it reads GHVDSGKS. A GTP-binding site is contributed by 14–21; sequence GHVDSGKS. An N6-methyllysine modification is found at lysine 30. Positions 70–74 are G2; the sequence is GITID. An N6,N6,N6-trimethyllysine modification is found at lysine 79. Residues 91–94 form a G3 region; sequence DAPG. GTP-binding positions include 91–95 and 153–156; these read DAPGH and NKMD. Residues 153 to 156 are G4; sequence NKMD. A G5 region spans residues 192 to 194; the sequence is SGW. Lysine 316 is subject to N6,N6-dimethyllysine; alternate. Lysine 316 carries the post-translational modification N6-methyllysine; alternate. The residue at position 390 (lysine 390) is an N6-methyllysine.

The protein belongs to the TRAFAC class translation factor GTPase superfamily. Classic translation factor GTPase family. EF-Tu/EF-1A subfamily.

The protein resides in the cytoplasm. In terms of biological role, this protein promotes the GTP-dependent binding of aminoacyl-tRNA to the A-site of ribosomes during protein biosynthesis. The sequence is that of Elongation factor 1-alpha (TEF-1) from Absidia glauca (Pin mould).